A 713-amino-acid polypeptide reads, in one-letter code: Major surface-labeled trophozoite antigen 417 (713 aa).

Positions 1–17 are cleaved as a signal peptide; it reads MFGRFLLAIVILQLART. Residues 18–679 are Extracellular-facing; the sequence is ACTQEADDGK…KDSGSTNKSG (662 aa). N-linked (GlcNAc...) asparagine glycosylation is found at asparagine 289 and asparagine 676. The helical transmembrane segment at 680 to 708 threads the bilayer; sequence LSTGAIAGISVAVIVVVGGLIGFLCWWFL. Topologically, residues 709–713 are cytoplasmic; the sequence is CRGKA.

This sequence belongs to the Giardia variant surface protein family.

Its subcellular location is the cell membrane. The protein is Major surface-labeled trophozoite antigen 417 (TSA 417) of Giardia intestinalis (Giardia lamblia).